Reading from the N-terminus, the 226-residue chain is Endonuclease V (226 aa).

Mg(2+) is bound by residues D42 and D110.

The protein belongs to the endonuclease V family. Mg(2+) is required as a cofactor.

It localises to the cytoplasm. It catalyses the reaction Endonucleolytic cleavage at apurinic or apyrimidinic sites to products with a 5'-phosphate.. Its function is as follows. DNA repair enzyme involved in the repair of deaminated bases. Selectively cleaves double-stranded DNA at the second phosphodiester bond 3' to a deoxyinosine leaving behind the intact lesion on the nicked DNA. The protein is Endonuclease V of Thermus thermophilus (strain ATCC BAA-163 / DSM 7039 / HB27).